A 223-amino-acid chain; its full sequence is Small ribosomal subunit protein uS3 (223 aa).

Residues 39-107 (VREFLHKKLA…PVQINIEEVR (69 aa)) form the KH type-2 domain.

This sequence belongs to the universal ribosomal protein uS3 family. As to quaternary structure, part of the 30S ribosomal subunit. Forms a tight complex with proteins S10 and S14.

Functionally, binds the lower part of the 30S subunit head. Binds mRNA in the 70S ribosome, positioning it for translation. In Francisella tularensis subsp. holarctica (strain FTNF002-00 / FTA), this protein is Small ribosomal subunit protein uS3.